Consider the following 238-residue polypeptide: Ribitol-5-phosphate cytidylyltransferase 2 (238 aa).

CTP contacts are provided by residues 7–10 (LAGG) and 81–87 (GTDRNET).

This sequence belongs to the IspD/TarI cytidylyltransferase family. TarI subfamily.

The catalysed reaction is D-ribitol 5-phosphate + CTP + H(+) = CDP-L-ribitol + diphosphate. Its pathway is cell wall biogenesis; poly(ribitol phosphate) teichoic acid biosynthesis. Catalyzes the transfer of the cytidylyl group of CTP to D-ribitol 5-phosphate. In Staphylococcus aureus (strain bovine RF122 / ET3-1), this protein is Ribitol-5-phosphate cytidylyltransferase 2.